A 99-amino-acid polypeptide reads, in one-letter code: Indole-3-acetic acid-induced protein ARG2 (99 aa).

The interval 40–62 (RGGASIGGNMVPKSGEEKVRGGE) is disordered. The span at 53-62 (SGEEKVRGGE) shows a compositional bias: basic and acidic residues.

The sequence is that of Indole-3-acetic acid-induced protein ARG2 (ARG2) from Vigna radiata var. radiata (Mung bean).